Here is a 244-residue protein sequence, read N- to C-terminus: SURF1-like protein (244 aa).

The next 2 helical transmembrane spans lie at 7-23 and 201-219; these read ILTT…WQLS and YAIT…YVIY.

Belongs to the SURF1 family.

Its subcellular location is the cell membrane. This Rickettsia prowazekii (strain Madrid E) protein is SURF1-like protein.